The sequence spans 249 residues: tRNA (guanine-N(1)-)-methyltransferase (249 aa).

S-adenosyl-L-methionine is bound by residues G113 and 133-138 (IGDFVV).

Belongs to the RNA methyltransferase TrmD family. As to quaternary structure, homodimer.

The protein resides in the cytoplasm. The enzyme catalyses guanosine(37) in tRNA + S-adenosyl-L-methionine = N(1)-methylguanosine(37) in tRNA + S-adenosyl-L-homocysteine + H(+). Specifically methylates guanosine-37 in various tRNAs. This chain is tRNA (guanine-N(1)-)-methyltransferase, found in Neisseria meningitidis serogroup C / serotype 2a (strain ATCC 700532 / DSM 15464 / FAM18).